The following is a 326-amino-acid chain: Target of rapamycin complex subunit LST8 (326 aa).

The residue at position 1 (M1) is an N-acetylmethionine. WD repeat units lie at residues 1–37, 40–80, 83–122, 126–165, and 168–207; these read MNTSPGTVGSDPVILATAGYDHTVRFWQAHSGICTRT, HQDS…PIIS, GVNKNVASVGFHEDGRWMYTGGEDCTARIWDLRSRNLQCQ, QVNAPINCVCLHPNQAELIVGDQSGAIHIWDLKTDHNEQL, and EPEVSITSAHIDPDASYMAAVNSTGNCYVWNLTGGIGDEV. Phosphothreonine is present on T51. Residue K86 forms a Glycyl lysine isopeptide (Lys-Gly) (interchain with G-Cter in SUMO3) linkage. Residues K215, K245, and K261 each participate in a glycyl lysine isopeptide (Lys-Gly) (interchain with G-Cter in SUMO3) cross-link. A WD 6 repeat occupies 218–257; sequence AHTRYALQCRFSPDSTLLATCSADQTCKIWRTSNFSLMTE. A WD 7 repeat occupies 268 to 309; the sequence is SSRGWMWGCAFSGDSQYIVTASSDNLARLWCVETGEIKREYG. K305 participates in a covalent cross-link: Glycyl lysine isopeptide (Lys-Gly) (interchain with G-Cter in SUMO3); alternate. Glycyl lysine isopeptide (Lys-Gly) (interchain with G-Cter in ubiquitin); alternate cross-links involve residues K305 and K313. K313 is covalently cross-linked (Glycyl lysine isopeptide (Lys-Gly) (interchain with G-Cter in SUMO1); alternate).

Belongs to the WD repeat LST8 family. As to quaternary structure, part of the mechanistic target of rapamycin complex 1 (mTORC1) which contains MTOR, MLST8 and RPTOR. mTORC1 associates with AKT1S1/PRAS40, which inhibits its activity. mTORC1 binds to and is inhibited by FKBP12-rapamycin. Within mTORC1, interacts directly with MTOR and RPTOR. Component of the mechanistic target of rapamycin complex 2 (mTORC2), consisting in two heterotretramers composed of MTOR, MLST8, RICTOR and MAPKAP1/SIN1. Contrary to mTORC1, mTORC2 does not bind to and is not sensitive to FKBP12-rapamycin. mTORC1 and mTORC2 associate with DEPTOR, which regulates their activity. Interacts with RHEB. Interacts with MEAK7. Interacts with SIK3. Interacts with SLC38A7; this interaction promotes the recruitment of mTORC1 to the lysosome and its subsequent activation. Phosphorylation at Thr-51 by CDK1 promotes ubiquitination by the SCF(FBXW7) complex, followed by degradation. Post-translationally, ubiquitination by the SCF(FBXW7) and SCF(FBXW11) complexes following phosphorylation at Thr-51 by CDK1, leads to its degradation by the proteasome. Ubiquitination at Lys-305 and Lys-313 by TRAF2 via 'Lys-63'-linked polyubiquitin chains inhibits formation of the mTORC2 complex, while promoting formation of the mTORC1 complex: ubiquitination disrupts the interaction between MLST8 and MAPKAP1/SIN1 to favor mTORC1 assembly. Deubiquitination at Lys-305 and Lys-313 by OTUD7B promotes MLST8 interaction with MAPKAP1/SIN1, facilitating mTORC2 assembly. In terms of processing, sumoylation with SUMO1, SUMO2 and SUMO3 promotes assembly of both mTORC1 and mTORC2 complexes.

Its subcellular location is the lysosome membrane. It is found in the cytoplasm. Subunit of both mTORC1 and mTORC2, which regulates cell growth and survival in response to nutrient and hormonal signals. mTORC1 is activated in response to growth factors or amino acids. In response to nutrients, mTORC1 is recruited to the lysosome membrane and promotes protein, lipid and nucleotide synthesis by phosphorylating several substrates, such as ribosomal protein S6 kinase (RPS6KB1 and RPS6KB2) and EIF4EBP1 (4E-BP1). In the same time, it inhibits catabolic pathways by phosphorylating the autophagy initiation components ULK1 and ATG13, as well as transcription factor TFEB, a master regulators of lysosomal biogenesis and autophagy. The mTORC1 complex is inhibited in response to starvation and amino acid depletion. Within mTORC1, MLST8 interacts directly with MTOR and enhances its kinase activity. In nutrient-poor conditions, stabilizes the MTOR-RPTOR interaction and favors RPTOR-mediated inhibition of MTOR activity. As part of the mTORC2 complex, transduces signals from growth factors to pathways involved in proliferation, cytoskeletal organization, lipogenesis and anabolic output. mTORC2 is also activated by growth factors, but seems to be nutrient-insensitive. In response to growth factors, mTORC2 phosphorylates and activates AGC protein kinase family members, including AKT (AKT1, AKT2 and AKT3), PKC (PRKCA, PRKCB and PRKCE) and SGK1. mTORC2 functions upstream of Rho GTPases to regulate the actin cytoskeleton, probably by activating one or more Rho-type guanine nucleotide exchange factors. mTORC2 promotes the serum-induced formation of stress-fibers or F-actin. mTORC2 plays a critical role in AKT1 activation by mediating phosphorylation of different sites depending on the context, such as 'Thr-450', 'Ser-473', 'Ser-477' or 'Thr-479', facilitating the phosphorylation of the activation loop of AKT1 on 'Thr-308' by PDPK1/PDK1 which is a prerequisite for full activation. mTORC2 regulates the phosphorylation of SGK1 at 'Ser-422'. mTORC2 also modulates the phosphorylation of PRKCA on 'Ser-657'. Within mTORC2, MLST8 acts as a bridge between MAPKAP1/SIN1 and MTOR. This chain is Target of rapamycin complex subunit LST8, found in Bos taurus (Bovine).